Consider the following 101-residue polypeptide: Large ribosomal subunit protein uL24 (101 aa).

It belongs to the universal ribosomal protein uL24 family. In terms of assembly, part of the 50S ribosomal subunit.

In terms of biological role, one of two assembly initiator proteins, it binds directly to the 5'-end of the 23S rRNA, where it nucleates assembly of the 50S subunit. Functionally, one of the proteins that surrounds the polypeptide exit tunnel on the outside of the subunit. The polypeptide is Large ribosomal subunit protein uL24 (Jannaschia sp. (strain CCS1)).